Consider the following 668-residue polypeptide: Acyl-CoA-binding domain-containing protein 4 (668 aa).

Residues 12–106 form the ACB domain; that stretch reads YPERFYAAAS…LEEDDPGWYS (95 aa). An acyl-CoA is bound by residues lysine 33, 48–52, and lysine 74; that span reads YALYQ. 6 Kelch repeats span residues 195–242, 255–305, 307–356, 358–407, 408–456, and 463–508; these read KMYI…TLLA, KLLS…MVGK, LVIF…VHAE, FLLI…TIGE, NWFI…LVVS, and VLVA…VNNA. Residues serine 515 and serine 520 each carry the phosphoserine modification. The stretch at 538-647 forms a coiled coil; it reads KVEGNSERII…EQAAMNAKRQ (110 aa). The segment at 639–668 is disordered; the sequence is QAAMNAKRQGSGGVWGWLAGSPQEKDDDSP.

The protein belongs to the ACBP family. As to quaternary structure, interacts with RAP2-3/EBP, an ethylene-responsive element binding protein. As to expression, mostly expressed in roots, stems, and leaves, and, to a lower extent, in flowers and siliques.

The protein resides in the cytoplasm. Functionally, binds medium- and long-chain acyl-CoA esters with very high affinity. Can interact in vitro with oleoyl-CoA, barely with palmitoyl-CoA, but not with arachidonyl-CoA. May function as an intracellular carrier of acyl-CoA esters. Plays a role in the biosynthesis of membrane lipids including galactolipids and phospholipids. This is Acyl-CoA-binding domain-containing protein 4 (ACBP4) from Arabidopsis thaliana (Mouse-ear cress).